We begin with the raw amino-acid sequence, 363 residues long: Histidinol-phosphate aminotransferase (363 aa).

K218 is subject to N6-(pyridoxal phosphate)lysine.

This sequence belongs to the class-II pyridoxal-phosphate-dependent aminotransferase family. Histidinol-phosphate aminotransferase subfamily. Homodimer. Pyridoxal 5'-phosphate is required as a cofactor.

It carries out the reaction L-histidinol phosphate + 2-oxoglutarate = 3-(imidazol-4-yl)-2-oxopropyl phosphate + L-glutamate. Its pathway is amino-acid biosynthesis; L-histidine biosynthesis; L-histidine from 5-phospho-alpha-D-ribose 1-diphosphate: step 7/9. This chain is Histidinol-phosphate aminotransferase, found in Xanthomonas axonopodis pv. citri (strain 306).